A 39-amino-acid polypeptide reads, in one-letter code: Gonadal protein gdl-ORF39 (39 aa).

In terms of tissue distribution, in bundles of maturing sperm of larval, pupal and adult males.

This is Gonadal protein gdl-ORF39 (gdl-ORF39) from Drosophila melanogaster (Fruit fly).